Consider the following 212-residue polypeptide: Probable GTP-binding protein EngB (212 aa).

One can recognise an EngB-type G domain in the interval 38 to 210 (SLPEIAFVGK…KASLAKCIKF (173 aa)). Residues 46–53 (GKSNVGKS), 73–77 (GRTRQ), 91–94 (DLPG), 158–161 (TKSD), and 189–191 (VSN) each bind GTP. Mg(2+) contacts are provided by S53 and T75.

This sequence belongs to the TRAFAC class TrmE-Era-EngA-EngB-Septin-like GTPase superfamily. EngB GTPase family. It depends on Mg(2+) as a cofactor.

Necessary for normal cell division and for the maintenance of normal septation. The polypeptide is Probable GTP-binding protein EngB (Rickettsia rickettsii (strain Sheila Smith)).